A 406-amino-acid polypeptide reads, in one-letter code: chitinase-like effector (406 aa).

An N-terminal signal peptide occupies residues 1 to 23 (MLTLLPSLILLLSTLSLSTPANA). In terms of domain architecture, GH18 spans 26–405 (AIAKAYYPGW…DAVRHGAGFK (380 aa)). Tyrosine 138 and tryptophan 384 together coordinate chitin.

The protein belongs to the glycosyl hydrolase 18 family.

Its subcellular location is the secreted. Its function is as follows. Catalytically impaired chitinase that binds efficiently to chitin, but not to chitosan, xylan, or cellulose. Despite the lack of chitinolytic activity, retains substrate binding specificity and acts as an effector to prevent chitin-triggered immunity by sequestering immunogenic chitin fragments. This Moniliophthora roreri (Frosty pod rot fungus) protein is chitinase-like effector (Chi).